The primary structure comprises 414 residues: Adenylosuccinate synthetase (414 aa).

Residues 12–18 (GDEGKGK) and 40–42 (GHT) each bind GTP. D13 functions as the Proton acceptor in the catalytic mechanism. Mg(2+) is bound by residues D13 and G40. IMP-binding positions include 13–16 (DEGK), 38–41 (NAGH), T124, R138, Q216, T231, and R297. H41 (proton donor) is an active-site residue. 293 to 299 (STTGRPR) is a substrate binding site. Residues R299, 325 to 327 (KLD), and 403 to 405 (STG) each bind GTP.

It belongs to the adenylosuccinate synthetase family. In terms of assembly, homodimer. The cofactor is Mg(2+).

The protein localises to the cytoplasm. The catalysed reaction is IMP + L-aspartate + GTP = N(6)-(1,2-dicarboxyethyl)-AMP + GDP + phosphate + 2 H(+). Its pathway is purine metabolism; AMP biosynthesis via de novo pathway; AMP from IMP: step 1/2. In terms of biological role, plays an important role in the de novo pathway of purine nucleotide biosynthesis. Catalyzes the first committed step in the biosynthesis of AMP from IMP. The protein is Adenylosuccinate synthetase of Hydrogenobaculum sp. (strain Y04AAS1).